The following is a 277-amino-acid chain: Shikimate dehydrogenase (NADP(+)) (277 aa).

Shikimate contacts are provided by residues 18–20 (SKS) and T65. The Proton acceptor role is filled by K69. E81 is an NADP(+) binding site. Residues N90 and D106 each contribute to the shikimate site. Residues 130–134 (GAGGA), 154–159 (NRTFSK), and M217 contribute to the NADP(+) site. Residue Y219 coordinates shikimate. G241 provides a ligand contact to NADP(+).

This sequence belongs to the shikimate dehydrogenase family. Homodimer.

The catalysed reaction is shikimate + NADP(+) = 3-dehydroshikimate + NADPH + H(+). The protein operates within metabolic intermediate biosynthesis; chorismate biosynthesis; chorismate from D-erythrose 4-phosphate and phosphoenolpyruvate: step 4/7. Involved in the biosynthesis of the chorismate, which leads to the biosynthesis of aromatic amino acids. Catalyzes the reversible NADPH linked reduction of 3-dehydroshikimate (DHSA) to yield shikimate (SA). In Vibrio campbellii (strain ATCC BAA-1116), this protein is Shikimate dehydrogenase (NADP(+)).